Reading from the N-terminus, the 273-residue chain is Protein INAPERTURATE POLLEN1 (273 aa).

Residues 12-267 form the DOG1 domain; that stretch reads SRRFNDFYED…KDQILLQDFE (256 aa).

In terms of tissue distribution, expressed only in anthers and in pollen. Not detected in other flower tissues, stems, leaves and siliques.

It localises to the cytoplasm. Functionally, required for the formation of pollen surface apertures, which arise by restriction of exine deposition at specific sites. The aperture length depends on the INP1 dosage. Does not play a role in specifying the number or position of apertures. Acts in a sporophytic manner. This chain is Protein INAPERTURATE POLLEN1, found in Arabidopsis thaliana (Mouse-ear cress).